A 591-amino-acid chain; its full sequence is L-fucose isomerase (591 aa).

Residues E337 and D361 each act as proton acceptor in the active site. Mn(2+)-binding residues include E337, D361, and H528.

This sequence belongs to the L-fucose isomerase family. In terms of assembly, homohexamer. Mn(2+) serves as cofactor.

Its subcellular location is the cytoplasm. The enzyme catalyses L-fucose = L-fuculose. It functions in the pathway carbohydrate degradation; L-fucose degradation; L-lactaldehyde and glycerone phosphate from L-fucose: step 1/3. Its function is as follows. Converts the aldose L-fucose into the corresponding ketose L-fuculose. The chain is L-fucose isomerase from Salmonella choleraesuis (strain SC-B67).